The following is a 414-amino-acid chain: 2,3-bisphosphoglycerate-independent phosphoglycerate mutase (414 aa).

The protein belongs to the BPG-independent phosphoglycerate mutase family. A-PGAM subfamily.

The enzyme catalyses (2R)-2-phosphoglycerate = (2R)-3-phosphoglycerate. Its pathway is carbohydrate degradation; glycolysis; pyruvate from D-glyceraldehyde 3-phosphate: step 3/5. Functionally, catalyzes the interconversion of 2-phosphoglycerate and 3-phosphoglycerate. In Saccharolobus solfataricus (strain ATCC 35092 / DSM 1617 / JCM 11322 / P2) (Sulfolobus solfataricus), this protein is 2,3-bisphosphoglycerate-independent phosphoglycerate mutase.